The following is a 164-amino-acid chain: Two-component response regulator ARR16 (164 aa).

The 131-residue stretch at 30–160 (HVLAVDDNLI…DVEKLKCHLM (131 aa)) folds into the Response regulatory domain. Residue D93 is modified to 4-aspartylphosphate.

This sequence belongs to the ARR family. Type-A subfamily. Post-translationally, two-component system major event consists of a His-to-Asp phosphorelay between a sensor histidine kinase (HK) and a response regulator (RR). In plants, the His-to-Asp phosphorelay involves an additional intermediate named Histidine-containing phosphotransfer protein (HPt). This multistep phosphorelay consists of a His-Asp-His-Asp sequential transfer of a phosphate group between first a His and an Asp of the HK protein, followed by the transfer to a conserved His of the HPt protein and finally the transfer to an Asp in the receiver domain of the RR protein.

Its subcellular location is the nucleus. Its function is as follows. Functions as a response regulator involved in His-to-Asp phosphorelay signal transduction system. Phosphorylation of the Asp residue in the receiver domain activates the ability of the protein to promote the transcription of target genes. Type-A response regulators seem to act as negative regulators of the cytokinin signaling. This chain is Two-component response regulator ARR16 (ARR16), found in Arabidopsis thaliana (Mouse-ear cress).